The following is a 162-amino-acid chain: UPF0178 protein RHOS4_24670 (162 aa).

The protein belongs to the UPF0178 family.

This chain is UPF0178 protein RHOS4_24670, found in Cereibacter sphaeroides (strain ATCC 17023 / DSM 158 / JCM 6121 / CCUG 31486 / LMG 2827 / NBRC 12203 / NCIMB 8253 / ATH 2.4.1.) (Rhodobacter sphaeroides).